The sequence spans 527 residues: MPHGAEREASPAEESAGTRPLTGEEYLESLRDAREVYLDGSRVKDVTAHPAFHNPARMTARLYDSLHDPAQKAVLTAPTDAGDGFTHRFFTAPRSVDDLVKDQAAIASWARKSYGWMGRSPDYKASFLGTLGANADFYEPFADNARRWYRESQEKVLYWNHAFLHPPVDRSLPADEVGDVFIHVERETDAGLVVSGAKVVATGSALTHAAFISHWGLPIKDRKFALVATVPMDADGLKVICRPSYSANAATTGSPFDNPLSSRLDENDAILVLDQVLIPWENVFVYGNLGKVHLLAGQSGMIERATFHGCTRLAVKLEFIAGLLAKALDITGAKDFRGVQTRLGEVLAWRNLFWSLSDAAARNPVPWKNGTLLPNPQAGMAYRWFMQIGYPRVLEIVQQDVASGLMYVNSSTEDFRNPETGPYLEKYLRGSDGAGAVERVKVMKLLWDAVGSDFGGRHELYERNYSGNHENTRIELLLSQTASGKLDSYMDFAQACMDEYDLDGWTAPDLESFHAMRSASRDLLGGL.

Residues 1 to 10 are compositionally biased toward basic and acidic residues; sequence MPHGAEREAS. The interval 1–22 is disordered; sequence MPHGAEREASPAEESAGTRPLT. FAD-binding positions include 161–163, 167–170, and threonine 202; these read HAF and PVDR.

The protein belongs to the FADH(2)-utilizing monooxygenase family. As to quaternary structure, homotetramer.

The enzyme catalyses (3S)-3-amino-3-(3-chloro-4-hydroxyphenyl)propanoyl-[SgcC2 peptidyl-carrier protein] + FADH2 + O2 = (3S)-3-amino-3-(3-chloro-4,5-dihydroxyphenyl)propanoyl-[SgcC2 peptidyl-carrier protein] + FAD + H2O + H(+). It functions in the pathway antibiotic biosynthesis. With respect to regulation, the SgcE6-SgcC hydroxylation activity decreases in the presence of excess FAD. Oxygenase component of a two-component system involved in the biosynthesis of the enediyne antitumor antibiotic C-1027. Uses FADH(2) supplied by SgcE6 to catalyze the C-5 hydroxylation of (S)-3-chloro-beta-tyrosyl-S-SgcC2. Can also efficiently catalyze the regioselective hydroxylation of other 3-substituted beta-tyrosyl-S-SgcC2 analogs, including the bromo-, iodo-, fluoro-, and methyl-substituted analogs, but does not accept 3-hydroxy-beta-tyrosyl-S-SgcC2 as a substrate. Is only active with SgcC2 (peptidyl carrier protein)-tethered substrates. This chain is (3S)-3-amino-3-(3-chloro-4-hydroxyphenyl)propanoyl-[peptidyl-carrier protein SgcC2] monooxygenase, found in Streptomyces globisporus.